Reading from the N-terminus, the 316-residue chain is Polyprenyl transferase dpchC (316 aa).

A run of 8 helical transmembrane segments spans residues 24-44 (PLFT…AKMA), 60-80 (ALCF…NDWI), 105-125 (EAMV…EVML), 154-174 (MLGI…AVIG), 192-212 (CLPL…AYSY), 234-254 (IHLL…IYLF), 258-278 (SLWL…QQLV), and 296-316 (FILG…TGSA).

This sequence belongs to the UbiA prenyltransferase family. The cofactor is Mg(2+).

It is found in the membrane. It participates in secondary metabolite biosynthesis; terpenoid biosynthesis. Polyprenyl transferase; part of the gene cluster that mediates the biosynthesis of the diterpenoid pyrones higginsianins A and B. The first step of the pathway is the synthesis of the alpha-pyrone moiety by the polyketide synthase dpchA via condensation of one acetyl-CoA starter unit with 3 malonyl-CoA units and 2 methylations. The alpha-pyrone is then combined with geranylgeranyl pyrophosphate (GGPP) formed by the GGPP synthase dpchD through the action of the prenyltransferase dpchC to yield a linear alpha-pyrone diterpenoid. Subsequent steps in the diterpenoid pyrone biosynthetic pathway involve the decalin core formation, which is initiated by the epoxidation of the C10-C11 olefin by the FAD-dependent oxidoreductase dpchE, and is followed by a cyclization cascade catalyzed by the terpene cyclase dpchB. The short chain dehydrogenase/reductase dpchG then oxidizes the 8S hydroxy group to a ketone and the short chain dehydrogenase/reductase dpchH reduces the ketone to the 8R hydroxy group to yield higginsianin B. Finally, the FAD-dependent oxidoreductase dpchF converts higginsianin B into higginsianin A. In Colletotrichum higginsianum (strain IMI 349063) (Crucifer anthracnose fungus), this protein is Polyprenyl transferase dpchC.